We begin with the raw amino-acid sequence, 407 residues long: Carbamoyl phosphate synthase small chain (407 aa).

Positions 1–203 (MSQNESGTIA…EPCGEYEGKE (203 aa)) are CPSase. Residues serine 61, glycine 255, and glycine 257 each contribute to the L-glutamine site. The 199-residue stretch at 207 to 405 (TVAAVDLGIK…CELMKNNSKE (199 aa)) folds into the Glutamine amidotransferase type-1 domain. Cysteine 283 acts as the Nucleophile in catalysis. L-glutamine contacts are provided by phenylalanine 284, glutamine 287, asparagine 325, glycine 327, and phenylalanine 328. Catalysis depends on residues histidine 378 and glutamate 380.

The protein belongs to the CarA family. Composed of two chains; the small (or glutamine) chain promotes the hydrolysis of glutamine to ammonia, which is used by the large (or ammonia) chain to synthesize carbamoyl phosphate. Tetramer of heterodimers (alpha,beta)4.

It carries out the reaction hydrogencarbonate + L-glutamine + 2 ATP + H2O = carbamoyl phosphate + L-glutamate + 2 ADP + phosphate + 2 H(+). The catalysed reaction is L-glutamine + H2O = L-glutamate + NH4(+). Its pathway is amino-acid biosynthesis; L-arginine biosynthesis; carbamoyl phosphate from bicarbonate: step 1/1. The protein operates within pyrimidine metabolism; UMP biosynthesis via de novo pathway; (S)-dihydroorotate from bicarbonate: step 1/3. Its function is as follows. Small subunit of the glutamine-dependent carbamoyl phosphate synthetase (CPSase). CPSase catalyzes the formation of carbamoyl phosphate from the ammonia moiety of glutamine, carbonate, and phosphate donated by ATP, constituting the first step of 2 biosynthetic pathways, one leading to arginine and/or urea and the other to pyrimidine nucleotides. The small subunit (glutamine amidotransferase) binds and cleaves glutamine to supply the large subunit with the substrate ammonia. This is Carbamoyl phosphate synthase small chain from Bifidobacterium longum (strain DJO10A).